We begin with the raw amino-acid sequence, 115 residues long: UPF0122 protein lp_1634 (115 aa).

This sequence belongs to the UPF0122 family.

In terms of biological role, might take part in the signal recognition particle (SRP) pathway. This is inferred from the conservation of its genetic proximity to ftsY/ffh. May be a regulatory protein. This chain is UPF0122 protein lp_1634, found in Lactiplantibacillus plantarum (strain ATCC BAA-793 / NCIMB 8826 / WCFS1) (Lactobacillus plantarum).